Here is a 457-residue protein sequence, read N- to C-terminus: Keratin, type II cytoskeletal 7 (457 aa).

Residue S2 is modified to N-acetylserine. A Phosphoserine modification is found at S2. A head region spans residues 2–84 (SIHFSSRSTA…DPTIQQVRQE (83 aa)). S7 is a glycosylation site (O-linked (GlcNAc) serine). A Dimethylated arginine; alternate modification is found at R15. R15 bears the Omega-N-methylarginine; alternate mark. Phosphoserine is present on residues S47 and S65. Positions 84–120 (EEREQIKTLNNKFASFIDKVRFLEQQNKMLETKWALL) are coil 1A. Positions 85–397 (EREQIKTLNN…KLLEGEESRL (313 aa)) constitute an IF rod domain. Position 91 is a phosphothreonine (T91). The interval 121-138 (QEQKSAKSSQLPRIFEAQ) is linker 1. A Glycyl lysine isopeptide (Lys-Gly) (interchain with G-Cter in SUMO2) cross-link involves residue K124. The tract at residues 139–230 (IAGLRQQLET…TLHETELAEL (92 aa)) is coil 1B. An N6-acetyllysine modification is found at K173. S211, S246, and S248 each carry phosphoserine. A linker 12 region spans residues 231–254 (QSQISDTSVVLSMDNSRSLDLDGI). The tract at residues 255 to 393 (IADVKAQYEE…ATYRKLLEGE (139 aa)) is coil 2. Residues K259 and K280 each participate in a glycyl lysine isopeptide (Lys-Gly) (interchain with G-Cter in SUMO2) cross-link. Position 283 is a phosphothreonine (T283). Glycyl lysine isopeptide (Lys-Gly) (interchain with G-Cter in SUMO2) cross-links involve residues K290 and K325. Positions 394–457 (ESRLSGDGMG…TSTTRRGTHN (64 aa)) are tail.

This sequence belongs to the intermediate filament family. In terms of assembly, heterotetramer of two type I and two type II keratins. Interacts with eukaryotic translation initiator factor 3 (eIF3) subunit EIF3S10. Interacts with GPER1. Post-translationally, arg-15 is dimethylated, probably to asymmetric dimethylarginine. As to expression, expressed in most simple epithelia tested including liver, lactating mammary gland, lung, kidney, stomach, duodenum, colon, oviduct, uterus, pancreas, epididymis, prostate, preputial gland and mesothelium, and in most stratified epithelia tested including dorsal skin, paw/toe, tail, tongue, cervix, forestomach, and bladder. Also expressed in Henle layer of the inner root sheath of whisker follicle.

Blocks interferon-dependent interphase and stimulates DNA synthesis in cells. This chain is Keratin, type II cytoskeletal 7, found in Mus musculus (Mouse).